A 257-amino-acid chain; its full sequence is Alkaline phosphatase synthesis transcriptional regulatory protein SphR (257 aa).

A Response regulatory domain is found at 25-148 (RILVVEDEAV…ELVARCRALL (124 aa)). D83 is modified (4-aspartylphosphate). A DNA-binding region (ompR/PhoB-type) is located at residues 159–257 (PAVLRYEGLK…TVRGFGYRLG (99 aa)).

In terms of processing, phosphorylated by SphS.

Its function is as follows. Member of the two-component regulatory system SphR/SphS. Response regulator. Involved in inducible production of alkaline phosphatase in response to phosphate limitation as it is directly involved in the regulation of phoA transcription in response to phosphate limitation. Binds to two distinct sites upstream from the phoA promoter. The sequence is that of Alkaline phosphatase synthesis transcriptional regulatory protein SphR (sphR) from Synechococcus elongatus (strain ATCC 33912 / PCC 7942 / FACHB-805) (Anacystis nidulans R2).